The primary structure comprises 173 residues: Zinc resistance-associated protein homolog (173 aa).

A signal peptide spans M1–A28.

This sequence belongs to the ZraP family.

This Nitratidesulfovibrio vulgaris (strain ATCC 29579 / DSM 644 / CCUG 34227 / NCIMB 8303 / VKM B-1760 / Hildenborough) (Desulfovibrio vulgaris) protein is Zinc resistance-associated protein homolog.